A 350-amino-acid polypeptide reads, in one-letter code: Ketol-acid reductoisomerase (NADP(+)) (350 aa).

Residues 4-187 enclose the KARI N-terminal Rossmann domain; sequence VSITTDYSRM…GGARANIIKT (184 aa). NADP(+) contacts are provided by residues 30–33, R53, T58, and 88–91; these read YGSQ and DMVQ. The active site involves H113. Residue G139 coordinates NADP(+). One can recognise a KARI C-terminal knotted domain in the interval 188–333; it reads TFKEETETDL…KQLRAKMVWL (146 aa). Residues D196, E200, E232, and E236 each coordinate Mg(2+). S257 contributes to the substrate binding site.

Belongs to the ketol-acid reductoisomerase family. Requires Mg(2+) as cofactor.

It carries out the reaction (2R)-2,3-dihydroxy-3-methylbutanoate + NADP(+) = (2S)-2-acetolactate + NADPH + H(+). The catalysed reaction is (2R,3R)-2,3-dihydroxy-3-methylpentanoate + NADP(+) = (S)-2-ethyl-2-hydroxy-3-oxobutanoate + NADPH + H(+). It functions in the pathway amino-acid biosynthesis; L-isoleucine biosynthesis; L-isoleucine from 2-oxobutanoate: step 2/4. The protein operates within amino-acid biosynthesis; L-valine biosynthesis; L-valine from pyruvate: step 2/4. Involved in the biosynthesis of branched-chain amino acids (BCAA). Catalyzes an alkyl-migration followed by a ketol-acid reduction of (S)-2-acetolactate (S2AL) to yield (R)-2,3-dihydroxy-isovalerate. In the isomerase reaction, S2AL is rearranged via a Mg-dependent methyl migration to produce 3-hydroxy-3-methyl-2-ketobutyrate (HMKB). In the reductase reaction, this 2-ketoacid undergoes a metal-dependent reduction by NADPH to yield (R)-2,3-dihydroxy-isovalerate. The protein is Ketol-acid reductoisomerase (NADP(+)) of Xylella fastidiosa (strain 9a5c).